The chain runs to 420 residues: Tyrosine--tRNA ligase 1 (420 aa).

Tyr-35 serves as a coordination point for L-tyrosine. Residues 40 to 49 (PTAGSLHIGH) carry the 'HIGH' region motif. Positions 172 and 176 each coordinate L-tyrosine. A 'KMSKS' region motif is present at residues 232–236 (KFGKT). Lys-235 lines the ATP pocket. The S4 RNA-binding domain occupies 355-419 (INIAELLVKS…GKKQFRLIKL (65 aa)).

Belongs to the class-I aminoacyl-tRNA synthetase family. TyrS type 1 subfamily. Homodimer.

Its subcellular location is the cytoplasm. It catalyses the reaction tRNA(Tyr) + L-tyrosine + ATP = L-tyrosyl-tRNA(Tyr) + AMP + diphosphate + H(+). In terms of biological role, catalyzes the attachment of tyrosine to tRNA(Tyr) in a two-step reaction: tyrosine is first activated by ATP to form Tyr-AMP and then transferred to the acceptor end of tRNA(Tyr). The protein is Tyrosine--tRNA ligase 1 of Pseudoalteromonas translucida (strain TAC 125).